Reading from the N-terminus, the 326-residue chain is 3-dehydrosphinganine reductase TSC10A (326 aa).

The Lumenal segment spans residues M1–L7. The helical transmembrane segment at F8–V28 threads the bilayer. Over R29 to N264 the chain is Cytoplasmic. NADPH contacts are provided by G46, S48, S49, G50, R71, K75, and D97. Residues G46 to G50 carry the GXSXG motif. S174 (proton donor) is an active-site residue. The active-site Proton acceptor is the Y188. The NADP(+) site is built by Y188 and K192. The Lowers pKa of active site Tyr role is filled by K192. Residues F265–P285 form a helical membrane-spanning segment. Over Q286–S288 the chain is Lumenal. A helical membrane pass occupies residues F289–F309. Over Q310–K326 the chain is Cytoplasmic.

The protein belongs to the short-chain dehydrogenases/reductases (SDR) family. In terms of tissue distribution, expressed in roots, leaves, stems, flowers and siliques.

It is found in the endoplasmic reticulum membrane. The enzyme catalyses sphinganine + NADP(+) = 3-oxosphinganine + NADPH + H(+). The protein operates within lipid metabolism; sphingolipid metabolism. In terms of biological role, catalyzes the reduction of 3'-oxosphinganine (3-ketodihydrosphingosine/KDS) to sphinganine (dihydrosphingosine/DHS), the second step of de novo sphingolipid biosynthesis. In plants, sphingolipids seems to play a critical role in mineral ion homeostasis, most likely through their involvement in the ion transport functionalities of membrane systems in the root. Lacks stereospecificity and can also produce L-threo-DHS in addition to D-erythro-DHS. The protein is 3-dehydrosphinganine reductase TSC10A (TSC10A) of Arabidopsis thaliana (Mouse-ear cress).